Here is a 474-residue protein sequence, read N- to C-terminus: tRNA-2-methylthio-N(6)-dimethylallyladenosine synthase (474 aa).

An MTTase N-terminal domain is found at Lys3–Gly120. [4Fe-4S] cluster-binding residues include Cys12, Cys49, Cys83, Cys157, Cys161, and Cys164. A Radical SAM core domain is found at Arg143–Ala375. Residues Arg378–Arg441 form the TRAM domain.

The protein belongs to the methylthiotransferase family. MiaB subfamily. Monomer. The cofactor is [4Fe-4S] cluster.

The protein resides in the cytoplasm. The enzyme catalyses N(6)-dimethylallyladenosine(37) in tRNA + (sulfur carrier)-SH + AH2 + 2 S-adenosyl-L-methionine = 2-methylsulfanyl-N(6)-dimethylallyladenosine(37) in tRNA + (sulfur carrier)-H + 5'-deoxyadenosine + L-methionine + A + S-adenosyl-L-homocysteine + 2 H(+). Catalyzes the methylthiolation of N6-(dimethylallyl)adenosine (i(6)A), leading to the formation of 2-methylthio-N6-(dimethylallyl)adenosine (ms(2)i(6)A) at position 37 in tRNAs that read codons beginning with uridine. This Citrobacter koseri (strain ATCC BAA-895 / CDC 4225-83 / SGSC4696) protein is tRNA-2-methylthio-N(6)-dimethylallyladenosine synthase.